The following is a 341-amino-acid chain: Hyaluronan and proteoglycan link protein 2 (341 aa).

A signal peptide spans 1 to 27 (MPSRIPLPAFCCFLLPWAFTSFHKALG). One can recognise an Ig-like V-type domain in the interval 35–143 (PHYLLPPIHE…GIEDESVALT (109 aa)). 5 disulfides stabilise this stretch: C58–C129, C171–C241, C195–C216, C266–C337, and C291–C312. 2 consecutive Link domains span residues 149 to 243 (VVFP…FCFT) and 246 to 339 (LAGQ…YCYA).

The protein belongs to the HAPLN family. As to expression, brain. Predominantly expressed by neurons. Colocalizes with versican V2 in developing and adult cerebellar white matter and at the nodes of Ranvier.

The protein resides in the secreted. The protein localises to the extracellular space. Its subcellular location is the extracellular matrix. Its function is as follows. Mediates a firm binding of versican V2 to hyaluronic acid. May play a pivotal role in the formation of the hyaluronan-associated matrix in the central nervous system (CNS) which facilitates neuronal conduction and general structural stabilization. Binds to hyaluronic acid. The polypeptide is Hyaluronan and proteoglycan link protein 2 (Hapln2) (Mus musculus (Mouse)).